Consider the following 62-residue polypeptide: UPF0434 protein Fphi_1862 (62 aa).

Belongs to the UPF0434 family.

This chain is UPF0434 protein Fphi_1862, found in Francisella philomiragia subsp. philomiragia (strain ATCC 25017 / CCUG 19701 / FSC 153 / O#319-036).